A 230-amino-acid chain; its full sequence is Nicotinamide riboside kinase (230 aa).

12–20 provides a ligand contact to ATP; the sequence is GASCSGKST. Residues serine 19 and aspartate 38 each coordinate Mg(2+). The Proton acceptor role is filled by aspartate 38. Substrate is bound by residues 38–41 and 56–57; these read DDFY and WD. Arginine 153 lines the ATP pocket. Substrate is bound by residues arginine 154 and 159–160; that span reads GY. Residues 157–159 and 203–205 contribute to the ATP site; these read RTG and RIQ.

This sequence belongs to the uridine kinase family. NRK subfamily.

It carries out the reaction beta-nicotinamide D-riboside + ATP = beta-nicotinamide D-ribonucleotide + ADP + H(+). The enzyme catalyses beta-D-ribosylnicotinate + ATP = nicotinate beta-D-ribonucleotide + ADP + H(+). It participates in cofactor biosynthesis; NAD(+) biosynthesis. Its function is as follows. Catalyzes the phosphorylation of nicotinamide riboside (NR) and nicotinic acid riboside (NaR) to form nicotinamide mononucleotide (NMN) and nicotinic acid mononucleotide (NaMN). The chain is Nicotinamide riboside kinase (nrk1) from Schizosaccharomyces pombe (strain 972 / ATCC 24843) (Fission yeast).